A 159-amino-acid chain; its full sequence is Transcription elongation factor GreA (159 aa).

Residues 47–73 (AEYDAAREEQSLTEAHIADLENKLSTA) are a coiled coil.

This sequence belongs to the GreA/GreB family.

Its function is as follows. Necessary for efficient RNA polymerase transcription elongation past template-encoded arresting sites. The arresting sites in DNA have the property of trapping a certain fraction of elongating RNA polymerases that pass through, resulting in locked ternary complexes. Cleavage of the nascent transcript by cleavage factors such as GreA or GreB allows the resumption of elongation from the new 3'terminus. GreA releases sequences of 2 to 3 nucleotides. In Chlorobium phaeobacteroides (strain DSM 266 / SMG 266 / 2430), this protein is Transcription elongation factor GreA.